Consider the following 263-residue polypeptide: Fructose-bisphosphate aldolase class 1 (263 aa).

Substrate is bound by residues Asp24–His25, His29, Asp33, and Trp144. Residue Tyr146 is the Proton donor of the active site. Residues Arg148, Lys177–Lys179, Ser202–Gly204, and Gly231–Arg232 each bind substrate. The active-site Schiff-base intermediate with dihydroxyacetone-P is the Lys177.

The protein belongs to the DeoC/FbaB aldolase family. As to quaternary structure, homodecamer (dimer of pentamers).

It localises to the cytoplasm. It catalyses the reaction beta-D-fructose 1,6-bisphosphate = D-glyceraldehyde 3-phosphate + dihydroxyacetone phosphate. Activated by citrate. Functionally, catalyzes the reversible cleavage of fructose 1,6-bisphosphate (FBP) to glyceraldehyde 3-phosphate (GAP) and dihydroxyacetone phosphate (DHAP). This is Fructose-bisphosphate aldolase class 1 (fba) from Thermoproteus tenax (strain ATCC 35583 / DSM 2078 / JCM 9277 / NBRC 100435 / Kra 1).